Consider the following 308-residue polypeptide: Acetaldehyde dehydrogenase 1 (308 aa).

10 to 13 (SGNI) contributes to the NAD(+) binding site. The Acyl-thioester intermediate role is filled by Cys-128. NAD(+) is bound by residues 159 to 167 (SAGPGTRAN) and Asn-285.

The protein belongs to the acetaldehyde dehydrogenase family.

The catalysed reaction is acetaldehyde + NAD(+) + CoA = acetyl-CoA + NADH + H(+). This chain is Acetaldehyde dehydrogenase 1, found in Salinispora arenicola (strain CNS-205).